Consider the following 336-residue polypeptide: MAKVYYEKDVMVNVLKGKKVAIVGYGSQGHAHAQNLRDNNFDVVVGLRKGKSWEKAKEDGFSVYSVAEAAAMADVVMVLLPDELQPEVYQAEIESNLQSGNALVFAHGFNVHFNQVTPPEDVDVFLVAPKGPGHLVRRTFTEGGAVPALFAVYQDATGTATEKALSYADGIGATRAGVLETTFKEETETDLFGEQAVLCGGVTALVKAGFETLVDAGYQPELAYFECLHELKLIVDLMYEGGLENMRYSVSDTAQWGDFVSGPRVVTEHTKKAMGDVLKEIQDGTFAKGWIAEHQAGRPHFHAINAKENEHQIEVVGRQLREMMPFVKPKVKTGVK.

In terms of domain architecture, KARI N-terminal Rossmann spans 2–181 (AKVYYEKDVM…GATRAGVLET (180 aa)). NADP(+) contacts are provided by residues 25–28 (YGSQ), arginine 48, serine 52, and 82–85 (DELQ). The active site involves histidine 107. NADP(+) is bound at residue glycine 133. Positions 182 to 327 (TFKEETETDL…RQLREMMPFV (146 aa)) constitute a KARI C-terminal knotted domain. Mg(2+) contacts are provided by aspartate 190, glutamate 194, glutamate 226, and glutamate 230. A substrate-binding site is contributed by serine 251.

Belongs to the ketol-acid reductoisomerase family. Mg(2+) serves as cofactor.

It carries out the reaction (2R)-2,3-dihydroxy-3-methylbutanoate + NADP(+) = (2S)-2-acetolactate + NADPH + H(+). The enzyme catalyses (2R,3R)-2,3-dihydroxy-3-methylpentanoate + NADP(+) = (S)-2-ethyl-2-hydroxy-3-oxobutanoate + NADPH + H(+). It functions in the pathway amino-acid biosynthesis; L-isoleucine biosynthesis; L-isoleucine from 2-oxobutanoate: step 2/4. It participates in amino-acid biosynthesis; L-valine biosynthesis; L-valine from pyruvate: step 2/4. Its function is as follows. Involved in the biosynthesis of branched-chain amino acids (BCAA). Catalyzes an alkyl-migration followed by a ketol-acid reduction of (S)-2-acetolactate (S2AL) to yield (R)-2,3-dihydroxy-isovalerate. In the isomerase reaction, S2AL is rearranged via a Mg-dependent methyl migration to produce 3-hydroxy-3-methyl-2-ketobutyrate (HMKB). In the reductase reaction, this 2-ketoacid undergoes a metal-dependent reduction by NADPH to yield (R)-2,3-dihydroxy-isovalerate. The chain is Ketol-acid reductoisomerase (NADP(+)) from Bacillus cytotoxicus (strain DSM 22905 / CIP 110041 / 391-98 / NVH 391-98).